A 590-amino-acid chain; its full sequence is Putative ABC transporter ATP-binding protein MM_3016 (590 aa).

2 ABC transporter domains span residues 11 to 251 (VRFE…KLGI) and 317 to 550 (VRIE…AGLI). ATP contacts are provided by residues 45–52 (GPSGCGKS) and 350–357 (GHNGAGKT).

The protein belongs to the ABC transporter superfamily.

It localises to the cell membrane. In terms of biological role, probably part of an ABC transporter complex. Responsible for energy coupling to the transport system. This chain is Putative ABC transporter ATP-binding protein MM_3016, found in Methanosarcina mazei (strain ATCC BAA-159 / DSM 3647 / Goe1 / Go1 / JCM 11833 / OCM 88) (Methanosarcina frisia).